Consider the following 115-residue polypeptide: Meiotically up-regulated gene 106 protein (115 aa).

Residues 1–34 (MSIKVEWIKFTRLKKCATLLVQLSLLRYRYMVLA) form the signal peptide. 2 consecutive transmembrane segments (helical) span residues 41-60 (CIVV…GALF) and 81-103 (GVKL…FTPY).

It is found in the membrane. Functionally, has a role in meiosis. The chain is Meiotically up-regulated gene 106 protein (mug106) from Schizosaccharomyces pombe (strain 972 / ATCC 24843) (Fission yeast).